The following is a 203-amino-acid chain: Urease accessory protein UreG (203 aa).

11-18 (GPVGSGKT) is a binding site for GTP.

This sequence belongs to the SIMIBI class G3E GTPase family. UreG subfamily. In terms of assembly, homodimer. UreD, UreF and UreG form a complex that acts as a GTP-hydrolysis-dependent molecular chaperone, activating the urease apoprotein by helping to assemble the nickel containing metallocenter of UreC. The UreE protein probably delivers the nickel.

The protein localises to the cytoplasm. Its function is as follows. Facilitates the functional incorporation of the urease nickel metallocenter. This process requires GTP hydrolysis, probably effectuated by UreG. The sequence is that of Urease accessory protein UreG from Prochlorococcus marinus (strain MIT 9301).